Reading from the N-terminus, the 489-residue chain is Cytochrome P450 monooxygenase trt6 (489 aa).

Residues 10 to 30 (SLWSFGLWILVILSPVLFFAS) traverse the membrane as a helical segment. N364 and N407 each carry an N-linked (GlcNAc...) asparagine glycan. C430 lines the heme pocket.

The protein belongs to the cytochrome P450 family. Requires heme as cofactor.

The protein localises to the membrane. It participates in secondary metabolite biosynthesis; terpenoid biosynthesis. In terms of biological role, cytochrome P450 monooxygenase; part of the gene cluster that mediates the biosynthesis of terretonin, a fungal meroterpenoid that acts as a mycotoxin. The first step of the pathway is the synthesis of 3,5-dimethylorsellinic acid (DMOA) by the polyketide synthase trt4. DMOA is then prenylated into farnesyl-DMOA by the polyprenyl transferase trt2. Methylation by the methyltransferase trt5 then leads to farnesyl-DMOA methyl ester which is further subject to epoxidation by the FAD-dependent monooxygenase trt8 to yield epoxyfarnesyl-DMOA methyl ester. Cyclization of epoxyfarnesyl-DMOA methyl ester by the terpene cyclase trt1 leads to a tetracycle intermediate which is in turn converted to preterretonin. Dehydrogenase trt9 comes next to transform preterretonin to preterrenoid. The FAD-dependent monooxygenase trt3 is then required for the C-hydroxylation at C16 of preterrenoid to yield terrenoid. The cytochrome P450 trt6 catalyzes three successive oxidations to transform terrenoid into an unstable intermediate, which then undergoes the D-ring expansion and unusual rearrangement of the methoxy group to afford the core skeleton of terretonin. Trt14 catalyzes the D-ring expansion of terretonin involving intramolecular methoxy rearrangement as well as the hydrolysis of the expanded D-ring and the methyl ester moiety. Finally, the nonheme iron-dependent dioxygenase trt7 accomplishes the last two oxidation reactions steps to complete the biosynthesis of terretonin. Terretonin C is produced via spontaneous decarboxylation of the terretonin precursor. Another shunt product of the terretonin biosynthesis is dihydrofarnesyl-DMOA, derived from epoxyfarnesyl-DMOA through hydrolysis of the epoxide. This is Cytochrome P450 monooxygenase trt6 from Aspergillus terreus (strain NIH 2624 / FGSC A1156).